Reading from the N-terminus, the 364-residue chain is Aminomethyltransferase (364 aa).

The protein belongs to the GcvT family. In terms of assembly, the glycine cleavage system is composed of four proteins: P, T, L and H.

It carries out the reaction N(6)-[(R)-S(8)-aminomethyldihydrolipoyl]-L-lysyl-[protein] + (6S)-5,6,7,8-tetrahydrofolate = N(6)-[(R)-dihydrolipoyl]-L-lysyl-[protein] + (6R)-5,10-methylene-5,6,7,8-tetrahydrofolate + NH4(+). In terms of biological role, the glycine cleavage system catalyzes the degradation of glycine. This chain is Aminomethyltransferase, found in Photorhabdus laumondii subsp. laumondii (strain DSM 15139 / CIP 105565 / TT01) (Photorhabdus luminescens subsp. laumondii).